A 310-amino-acid polypeptide reads, in one-letter code: Cytochrome f (310 aa).

The signal sequence occupies residues 1–23 (MRRLLSSTFAALIVGLAVFSAPA). Heme is bound by residues tyrosine 28, cysteine 48, cysteine 51, and histidine 52. A helical transmembrane segment spans residues 277 to 297 (IYGMLAFFAAVALAQIMLVLK).

This sequence belongs to the cytochrome f family. The 4 large subunits of the cytochrome b6-f complex are cytochrome b6, subunit IV (17 kDa polypeptide, PetD), cytochrome f and the Rieske protein, while the 4 small subunits are PetG, PetL, PetM and PetN. The complex functions as a dimer. The cofactor is heme.

Its subcellular location is the cellular thylakoid membrane. Its function is as follows. Component of the cytochrome b6-f complex, which mediates electron transfer between photosystem II (PSII) and photosystem I (PSI), cyclic electron flow around PSI, and state transitions. In Synechococcus sp. (strain CC9311), this protein is Cytochrome f.